We begin with the raw amino-acid sequence, 100 residues long: Enhancer of yellow 2 transcription factor (100 aa).

It belongs to the ENY2 family. Component of the nuclear pore complex (NPC)-associated AMEX complex (anchoring and mRNA export complex), composed of at least e(y)2 and xmas-2. Component of the SAGA transcription coactivator-HAT complexes, at least composed of Ada2b, e(y)2, Pcaf/Gcn5, Taf10 and Nipped-A/Trrap. Within the SAGA complex, e(y)2, Sgf11, and not/nonstop form an additional subcomplex of SAGA called the DUB module (deubiquitination module). Component of the THO complex, composed of at least e(y)2, HPR1, THO2, THOC5, THOC6 and THOC7. Interacts with e(y)1. Interacts with su(Hw) (via zinc fingers). Interacts with xmas-2; required for localization to the nuclear periphery. Interacts with the nuclear pore complex (NPC).

It is found in the nucleus. Its subcellular location is the nucleoplasm. The protein resides in the cytoplasm. Involved in mRNA export coupled transcription activation by association with both the AMEX and the SAGA complexes. The SAGA complex is a multiprotein complex that activates transcription by remodeling chromatin and mediating histone acetylation and deubiquitination. Within the SAGA complex, participates in a subcomplex that specifically deubiquitinates histone H2B. The SAGA complex is recruited to specific gene promoters by activators, where it is required for transcription. Required for nuclear receptor-mediated transactivation. Involved in transcription elongation by recruiting the THO complex onto nascent mRNA. The AMEX complex functions in docking export-competent ribonucleoprotein particles (mRNPs) to the nuclear entrance of the nuclear pore complex (nuclear basket). AMEX participates in mRNA export and accurate chromatin positioning in the nucleus by tethering genes to the nuclear periphery. This is Enhancer of yellow 2 transcription factor from Drosophila persimilis (Fruit fly).